Reading from the N-terminus, the 696-residue chain is Elongation factor G (696 aa).

The tr-type G domain occupies 8–286 (EDVRNIGIAA…AVVAYLPAPT (279 aa)). Residues 17 to 24 (AHIDAGKT), 81 to 85 (DTPGH), and 135 to 138 (NKMD) contribute to the GTP site.

Belongs to the TRAFAC class translation factor GTPase superfamily. Classic translation factor GTPase family. EF-G/EF-2 subfamily.

It is found in the cytoplasm. In terms of biological role, catalyzes the GTP-dependent ribosomal translocation step during translation elongation. During this step, the ribosome changes from the pre-translocational (PRE) to the post-translocational (POST) state as the newly formed A-site-bound peptidyl-tRNA and P-site-bound deacylated tRNA move to the P and E sites, respectively. Catalyzes the coordinated movement of the two tRNA molecules, the mRNA and conformational changes in the ribosome. The sequence is that of Elongation factor G from Sulfurimonas denitrificans (strain ATCC 33889 / DSM 1251) (Thiomicrospira denitrificans (strain ATCC 33889 / DSM 1251)).